We begin with the raw amino-acid sequence, 232 residues long: MADYDSAKYWSKQGARRGLQKTRYYCQICQRQCKDANGFQSHNKSPSHLRKISQVTAEDARRYNIQFEKGFLQLLKQRHGEKWIDANKVYNEYVQDRDHVHMNATMHRSLTQFVRYLGRAGKVDVDMDIDDTSENVEGPLLIRIHPSSLSSPSEDGMLRSQQEEQEVIAAELLKRQLNRAKRQTEKVYQPEMKSEISGDSTLKRVQVTFHGNGRVNKKKKKVPPRKDGIKFR.

A C2H2-type zinc finger spans residues 24-48 (YYCQICQRQCKDANGFQSHNKSPSH). Disordered stretches follow at residues 180–199 (AKRQ…ISGD) and 211–232 (GNGR…IKFR).

It localises to the nucleus. This chain is Zinc finger protein RTS2 (RTS2), found in Saccharomyces cerevisiae (strain ATCC 204508 / S288c) (Baker's yeast).